A 321-amino-acid chain; its full sequence is Polyprenyl transferase cle5 (321 aa).

Helical transmembrane passes span 26-46 (PLLATFSGVWATILAGSHKIT), 57-77 (VLSQALLCFICSFVFCGAGMV), 107-127 (EALVWMAFQFISSWVLVSWML), 132-149 (VQAAMLPVTLSTILYPFA), 159-179 (IYPQYLLGFTLAYPSLIGTLA), 189-209 (LWASINQSLPMFVTVFTWTLY), 232-252 (VLAGSYIHHLLVVLAVLVLGA), 262-282 (SQWLWGGWMGVWTWSFLGQLV), and 300-320 (FALGVWTVFVCVVELLIGGNG).

Belongs to the UbiA prenyltransferase family. It depends on Mg(2+) as a cofactor.

It is found in the membrane. Its pathway is secondary metabolite biosynthesis; terpenoid biosynthesis. In terms of biological role, polyprenyl transferase; part of the cluster A that mediates the biosynthesis of chevalone E and its oxidized derivatives that possess a unique five-membered lactone ring and can synergistically enhance the cytotoxicity of doxorubicin (DOX) in breast cancer cells. Within the pathway, cle5 takes part to the biosynthesis of the molecular scaffold by catalyzing the C-3 geranylgeranylation reaction of triacetic acid lactone (TAL) produced by cle1. The molecular scaffold is commonly biosynthesized by a series of enzymes including the non-reducing polyketide synthase (NR-PKS) cle1 that produces the alpha-pyrone triacetic acid lactone (TAL); The membrane-bound prenyltransferase cle5 that accepts TAL as its substrate to perform a C-3 geranylgeranylation reaction, in which the pathway-dedicated GGPS cle6 is required to provide GGPP, the other substrate of cle5; the FAD-dependent monooxygenase Cle3 that forms an (S)-epoxide ring at the terminal olefin of the geranylgeranyl group; and the terpene cyclase Cle7 that catalyzes the cyclization of the prenyl group that yields the pentacyclic pathway intermediate chevalone E. Chevalone E can derivatize into seven new oxidized analogs by the cytochrome P450 monooxygenases cle2 (acting at C-20) and cle4 (acting at C-11 and C-12). This chain is Polyprenyl transferase cle5, found in Aspergillus versicolor.